A 341-amino-acid chain; its full sequence is Ribosomal RNA small subunit methyltransferase H (341 aa).

S-adenosyl-L-methionine is bound by residues 47–49 (GGY), Asp64, Phe91, Asp109, and Gln116.

It belongs to the methyltransferase superfamily. RsmH family.

It is found in the cytoplasm. It catalyses the reaction cytidine(1402) in 16S rRNA + S-adenosyl-L-methionine = N(4)-methylcytidine(1402) in 16S rRNA + S-adenosyl-L-homocysteine + H(+). In terms of biological role, specifically methylates the N4 position of cytidine in position 1402 (C1402) of 16S rRNA. This chain is Ribosomal RNA small subunit methyltransferase H, found in Sinorhizobium medicae (strain WSM419) (Ensifer medicae).